Here is an 812-residue protein sequence, read N- to C-terminus: Plasminogen (812 aa).

The signal sequence occupies residues 1-19 (MDHKEVILLFLLLLKPGQG). A PAN domain is found at 20 to 98 (DSLDGYISTQ…RDVILFEKRV (79 aa)). 21 cysteine pairs are disulfide-bonded: cysteine 49–cysteine 73, cysteine 53–cysteine 61, cysteine 103–cysteine 181, cysteine 124–cysteine 164, cysteine 152–cysteine 176, cysteine 185–cysteine 262, cysteine 188–cysteine 316, cysteine 206–cysteine 245, cysteine 234–cysteine 257, cysteine 275–cysteine 352, cysteine 296–cysteine 335, cysteine 324–cysteine 347, cysteine 377–cysteine 454, cysteine 398–cysteine 437, cysteine 426–cysteine 449, cysteine 481–cysteine 560, cysteine 502–cysteine 543, cysteine 531–cysteine 555, cysteine 568–cysteine 687, cysteine 578–cysteine 586, and cysteine 609–cysteine 625. Kringle domains lie at 103-181 (CKTG…IPEC), 184-262 (ECMY…IPRC), 275-352 (CLKG…IPSC), 377-454 (CYQS…LKRC), and 481-560 (CMYG…IPLC). A Peptidase S1 domain is found at 582–810 (VVGGCVANPH…FVDWIEREMR (229 aa)). Serine 598 bears the Phosphoserine mark. Catalysis depends on charge relay system residues histidine 624 and aspartate 667. Phosphoserine is present on serine 690. 3 disulfide bridges follow: cysteine 701–cysteine 768, cysteine 731–cysteine 747, and cysteine 758–cysteine 786. The active-site Charge relay system is the serine 762.

It belongs to the peptidase S1 family. Plasminogen subfamily. Interacts (both mature PLG and the angiostatin peptide) with AMOT and CSPG4. Interacts (via the Kringle domains) with HRG; the interaction tethers PLG to the cell surface and enhances its activation. Interacts (via Kringle 4 domain) with ADA; the interaction stimulates PLG activation when in complex with DPP4. Angiostatin: Interacts with ATP5F1A; the interaction inhibits most of the angiogenic effects of angiostatin. In the presence of the inhibitor, the activation involves only cleavage after Arg-581, yielding two chains held together by two disulfide bonds. In the absence of the inhibitor, the activation involves additionally the removal of the activation peptide.

It localises to the secreted. It carries out the reaction Preferential cleavage: Lys-|-Xaa &gt; Arg-|-Xaa, higher selectivity than trypsin. Converts fibrin into soluble products.. Its activity is regulated as follows. Converted into plasmin by plasminogen activators, both plasminogen and its activator being bound to fibrin. Cannot be activated with streptokinase. Plasmin dissolves the fibrin of blood clots and acts as a proteolytic factor in a variety of other processes including embryonic development, tissue remodeling, tumor invasion, and inflammation. In ovulation, weakens the walls of the Graafian follicle. It activates the urokinase-type plasminogen activator, collagenases and several complement zymogens, such as C1, C4 and C5. Cleavage of fibronectin and laminin leads to cell detachment and apoptosis. Also cleaves fibrin, thrombospondin and von Willebrand factor. Its role in tissue remodeling and tumor invasion may be modulated by CSPG4. Binds to cells. In terms of biological role, angiostatin is an angiogenesis inhibitor that blocks neovascularization and growth of experimental primary and metastatic tumors in vivo. In Mus musculus (Mouse), this protein is Plasminogen (Plg).